Consider the following 233-residue polypeptide: tRNA (guanine-N(1)-)-methyltransferase (233 aa).

Residues G110 and I130–M135 contribute to the S-adenosyl-L-methionine site.

Belongs to the RNA methyltransferase TrmD family. In terms of assembly, homodimer.

The protein localises to the cytoplasm. The enzyme catalyses guanosine(37) in tRNA + S-adenosyl-L-methionine = N(1)-methylguanosine(37) in tRNA + S-adenosyl-L-homocysteine + H(+). Its function is as follows. Specifically methylates guanosine-37 in various tRNAs. This is tRNA (guanine-N(1)-)-methyltransferase from Finegoldia magna (strain ATCC 29328 / DSM 20472 / WAL 2508) (Peptostreptococcus magnus).